The following is a 386-amino-acid chain: MDSSDDEIACDEGDYKGAKDDNDLPHGLGKVKFSSGDEFIGAFEHGIKCGPGKFHFFDDSTLEGNYVDGELHGIGIYTNDDGSITKSTYCEGVMEGPSWEYDPEGNITFRGQYSEGVRCGLCFYYFPDGGSLIGNVNASGDLSADNIAYIYPDRTTALIGSFEEGDMITAKEANVTITGEKGEEISFPTVNSISPDPVYRLDVSTPHVISTRPLVPDPYESELVYAAPSKIPNAGEGLYAKCDVDQDTVMAFYNGVRLKQDEVENRDWSQNSNTISLTDDIAIDVPEEYVSTDNYCASLGHKVNHSFDPNCRYDIYQHPRFGFIKCVRTIRGVSEGDELTVHYTYEHNDGNKTREAEAPEWYKSQLKVFGVDRPAEILENMDEDYC.

Residues 1–12 (MDSSDDEIACDE) are compositionally biased toward acidic residues. Residues 1-21 (MDSSDDEIACDEGDYKGAKDD) are disordered. MORN repeat units follow at residues 15-38 (YKGA…SGDE), 39-61 (FIGA…DDST), 62-84 (LEGN…DGSI), and 109-131 (FRGQ…DGGS). One can recognise an SET domain in the interval 222–344 (ELVYAAPSKI…EGDELTVHYT (123 aa)). S-adenosyl-L-methionine-binding positions include 234-236 (AGE), Asn304, and His305.

Belongs to the class V-like SAM-binding methyltransferase superfamily. Histone-lysine methyltransferase family. SET7 subfamily.

It is found in the nucleus. It localises to the chromosome. The enzyme catalyses L-lysyl(4)-[histone H3] + S-adenosyl-L-methionine = N(6)-methyl-L-lysyl(4)-[histone H3] + S-adenosyl-L-homocysteine + H(+). The catalysed reaction is L-lysyl-[protein] + S-adenosyl-L-methionine = N(6)-methyl-L-lysyl-[protein] + S-adenosyl-L-homocysteine + H(+). Its function is as follows. Histone methyltransferase that specifically monomethylates 'Lys-4' of histone H3. H3 'Lys-4' methylation represents a specific tag for epigenetic transcriptional activation. Plays a central role in the transcriptional activation of genes. Also has methyltransferase activity toward non-histone proteins. The polypeptide is Histone-lysine N-methyltransferase SETD7 (setd7) (Halocynthia roretzi (Sea squirt)).